The following is a 271-amino-acid chain: 3-methyl-2-oxobutanoate hydroxymethyltransferase (271 aa).

Positions 51 and 90 each coordinate Mg(2+). 3-methyl-2-oxobutanoate is bound by residues 51–52, aspartate 90, and lysine 119; that span reads DS. Residue glutamate 121 participates in Mg(2+) binding. Residue glutamate 188 is the Proton acceptor of the active site.

This sequence belongs to the PanB family. As to quaternary structure, homodecamer; pentamer of dimers. Mg(2+) serves as cofactor.

It is found in the cytoplasm. The catalysed reaction is 3-methyl-2-oxobutanoate + (6R)-5,10-methylene-5,6,7,8-tetrahydrofolate + H2O = 2-dehydropantoate + (6S)-5,6,7,8-tetrahydrofolate. The protein operates within cofactor biosynthesis; (R)-pantothenate biosynthesis; (R)-pantoate from 3-methyl-2-oxobutanoate: step 1/2. In terms of biological role, catalyzes the reversible reaction in which hydroxymethyl group from 5,10-methylenetetrahydrofolate is transferred onto alpha-ketoisovalerate to form ketopantoate. The polypeptide is 3-methyl-2-oxobutanoate hydroxymethyltransferase (Aromatoleum aromaticum (strain DSM 19018 / LMG 30748 / EbN1) (Azoarcus sp. (strain EbN1))).